Consider the following 149-residue polypeptide: Acyl carrier protein 1, chloroplastic (149 aa).

A chloroplast-targeting transit peptide spans 1-59 (MAHCLAAVSSFSPSAVRRRLSSQVANVVSSRSSVSFHSRQMSFVSISSRPSSLRFKICC). The 76-residue stretch at 69 to 144 (KETVDKVCMI…DAANLIEKLV (76 aa)) folds into the Carrier domain. Ser-104 carries the post-translational modification O-(pantetheine 4'-phosphoryl)serine.

This sequence belongs to the acyl carrier protein (ACP) family. In terms of processing, 4'-phosphopantetheine is transferred from CoA to a specific serine of apo-ACP by acpS. This modification is essential for activity because fatty acids are bound in thioester linkage to the sulfhydryl of the prosthetic group.

It is found in the plastid. The protein resides in the chloroplast. Its pathway is lipid metabolism; fatty acid biosynthesis. In terms of biological role, carrier of the growing fatty acid chain in fatty acid biosynthesis. The chain is Acyl carrier protein 1, chloroplastic (ACL1.1) from Hordeum vulgare (Barley).